The primary structure comprises 208 residues: Microtubule-associated protein Jupiter (208 aa).

2 disordered regions span residues 24 to 43 (RPPG…QTPR) and 82 to 106 (RGQK…PGKN). Residue S30 is modified to Phosphoserine. Residue T41 is modified to Phosphothreonine. Residues 82-93 (RGQKTVDSHSRL) show a composition bias toward basic and acidic residues. Phosphothreonine is present on residues T98 and T102. A phosphoserine mark is found at S111, S139, and S150. Residues 132-208 (HYNGKSGSVS…PPGGYSSGLW (77 aa)) are disordered. Residues 137-150 (SGSVSSASSSVSSS) are compositionally biased toward low complexity. 2 stretches are compositionally biased toward polar residues: residues 151–165 (TENL…SEGN) and 178–189 (EYSQRQESSNGG).

Belongs to the MAP Jupiter family. In terms of tissue distribution, ubiquitous expression throughout development. Expressed during cell division in the syncytial embryo. Expressed in developing photoreceptors of the eye imaginal disk of the third larval stage. In adults, highly expressed in neurons of the brain, concentrated in axons. In the adult ovaries, expression accumulates in the germarium and the polar follicular cells as well as in the oocyte along the microtubule network.

It is found in the nucleus. The protein resides in the cytoplasm. The protein localises to the cytoskeleton. It localises to the spindle. Its function is as follows. Binds to all microtubule populations. In Drosophila melanogaster (Fruit fly), this protein is Microtubule-associated protein Jupiter.